Reading from the N-terminus, the 371-residue chain is Bifunctional enzyme IspD/IspF (371 aa).

Positions 1–212 (MLDISLIMLG…CLIPPSNEHF (212 aa)) are 2-C-methyl-D-erythritol 4-phosphate cytidylyltransferase. A 2-C-methyl-D-erythritol 2,4-cyclodiphosphate synthase region spans residues 212–371 (FTGIGFDAHE…ANLKYYDWTK (160 aa)). A divalent metal cation is bound by residues Asp-218 and His-220. Residues 218–220 (DAH) and 244–245 (HS) each bind 4-CDP-2-C-methyl-D-erythritol 2-phosphate. Position 252 (His-252) interacts with a divalent metal cation. Residues 266 to 268 (DIG), 271 to 275 (FPDTD), 342 to 345 (TTTE), Phe-349, and Arg-352 contribute to the 4-CDP-2-C-methyl-D-erythritol 2-phosphate site.

In the N-terminal section; belongs to the IspD/TarI cytidylyltransferase family. IspD subfamily. This sequence in the C-terminal section; belongs to the IspF family. Requires a divalent metal cation as cofactor.

The catalysed reaction is 2-C-methyl-D-erythritol 4-phosphate + CTP + H(+) = 4-CDP-2-C-methyl-D-erythritol + diphosphate. The enzyme catalyses 4-CDP-2-C-methyl-D-erythritol 2-phosphate = 2-C-methyl-D-erythritol 2,4-cyclic diphosphate + CMP. It functions in the pathway isoprenoid biosynthesis; isopentenyl diphosphate biosynthesis via DXP pathway; isopentenyl diphosphate from 1-deoxy-D-xylulose 5-phosphate: step 2/6. Its pathway is isoprenoid biosynthesis; isopentenyl diphosphate biosynthesis via DXP pathway; isopentenyl diphosphate from 1-deoxy-D-xylulose 5-phosphate: step 4/6. Bifunctional enzyme that catalyzes the formation of 4-diphosphocytidyl-2-C-methyl-D-erythritol from CTP and 2-C-methyl-D-erythritol 4-phosphate (MEP) (IspD), and catalyzes the conversion of 4-diphosphocytidyl-2-C-methyl-D-erythritol 2-phosphate (CDP-ME2P) to 2-C-methyl-D-erythritol 2,4-cyclodiphosphate (ME-CPP) with a corresponding release of cytidine 5-monophosphate (CMP) (IspF). The protein is Bifunctional enzyme IspD/IspF of Campylobacter curvus (strain 525.92).